Reading from the N-terminus, the 233-residue chain is 2-C-methyl-D-erythritol 4-phosphate cytidylyltransferase (233 aa).

Belongs to the IspD/TarI cytidylyltransferase family. IspD subfamily.

The enzyme catalyses 2-C-methyl-D-erythritol 4-phosphate + CTP + H(+) = 4-CDP-2-C-methyl-D-erythritol + diphosphate. It functions in the pathway isoprenoid biosynthesis; isopentenyl diphosphate biosynthesis via DXP pathway; isopentenyl diphosphate from 1-deoxy-D-xylulose 5-phosphate: step 2/6. In terms of biological role, catalyzes the formation of 4-diphosphocytidyl-2-C-methyl-D-erythritol from CTP and 2-C-methyl-D-erythritol 4-phosphate (MEP). The sequence is that of 2-C-methyl-D-erythritol 4-phosphate cytidylyltransferase from Geotalea uraniireducens (strain Rf4) (Geobacter uraniireducens).